The primary structure comprises 209 residues: ATP phosphoribosyltransferase (209 aa).

Belongs to the ATP phosphoribosyltransferase family. Short subfamily. As to quaternary structure, heteromultimer composed of HisG and HisZ subunits.

The protein resides in the cytoplasm. It carries out the reaction 1-(5-phospho-beta-D-ribosyl)-ATP + diphosphate = 5-phospho-alpha-D-ribose 1-diphosphate + ATP. Its pathway is amino-acid biosynthesis; L-histidine biosynthesis; L-histidine from 5-phospho-alpha-D-ribose 1-diphosphate: step 1/9. Its function is as follows. Catalyzes the condensation of ATP and 5-phosphoribose 1-diphosphate to form N'-(5'-phosphoribosyl)-ATP (PR-ATP). Has a crucial role in the pathway because the rate of histidine biosynthesis seems to be controlled primarily by regulation of HisG enzymatic activity. In Caldicellulosiruptor bescii (strain ATCC BAA-1888 / DSM 6725 / KCTC 15123 / Z-1320) (Anaerocellum thermophilum), this protein is ATP phosphoribosyltransferase.